We begin with the raw amino-acid sequence, 232 residues long: Mediator of RNA polymerase II transcription subunit 18 (232 aa).

The protein belongs to the Mediator complex subunit 18 family. As to quaternary structure, component of the Mediator complex.

It is found in the nucleus. Component of the Mediator complex, a coactivator involved in the regulated transcription of nearly all RNA polymerase II-dependent genes. Mediator functions as a bridge to convey information from gene-specific regulatory proteins to the basal RNA polymerase II transcription machinery. Mediator is recruited to promoters by direct interactions with regulatory proteins and serves as a scaffold for the assembly of a functional preinitiation complex with RNA polymerase II and the general transcription factors. This Caenorhabditis elegans protein is Mediator of RNA polymerase II transcription subunit 18 (mdt-18).